Consider the following 459-residue polypeptide: Protein maelstrom (459 aa).

Positions 2-69 (APKKHSGFMM…AQRAKRESSN (68 aa)) form a DNA-binding region, HMG box. Positions 43–78 (NTQQRGPYNSGGKDANVAQRAKRESSNGHGQVDKAQ) are disordered. The segment covering 63–78 (AKRESSNGHGQVDKAQ) has biased composition (basic and acidic residues).

It belongs to the maelstrom family. As to expression, in germaria and egg chambers, it is detected in the germline. In the germarium, it is in all regions, including region I where the germ cells are dividing. In early egg chambers, it is uniformly distributed throughout the nurse cells and oocyte but, by stage 5, it is most concentrated around the outer margins of the cells, closest to the periphery of the egg chamber. Level decreases in stages 5 and 6, but most noticeably in the oocyte, where protein level remains. No detectable protein from stage 8 onward (at protein level).

The protein resides in the cytoplasm. The protein localises to the nucleus. Its subcellular location is the perinuclear region. It localises to the cytoplasmic ribonucleoprotein granule. Involved both in the piRNA and miRNA metabolic processes. As a component of the meiotic nuage, plays a central role during oogenesis by repressing transposable elements and preventing their mobilization, which is essential for the germline integrity. Repression of transposable elements is mediated via the piRNA metabolic process, which mediates the repression of transposable elements during meiosis by forming complexes composed of piRNAs and Piwi proteins and governs the repression of transposons. As a nuclear component, it is required for proper differentiation in the germline stem cell (GSC) lineage by repressing microRNA-7 (miR-7), thereby acting as an indirect regulator of bag-of-marbles (Bam). Acts by binding to the promoter of miR-7 gene and repressing its expression; miR-7 repression alleviates the Bam repression by miR-7, thereby allowing differentiation in the germline stem cell (GSC) lineage. Indirectly required to position the microtubule organizing center in stage 2-6 oocytes. Involved in repression of long interspersed nuclear elements (LINEs) including HeT-A, I-element, TART and possibly mst40 LINEs; may have a role in production of piwi-interacting RNA (piRNA). In Drosophila melanogaster (Fruit fly), this protein is Protein maelstrom.